Consider the following 362-residue polypeptide: 3-dehydroquinate synthase (362 aa).

NAD(+) contacts are provided by residues 71–76 (DGEQYK), 105–109 (GVVGD), 129–130 (TT), K142, K151, and 169–172 (CLNT). Residues E184, H247, and H264 each coordinate Zn(2+).

The protein belongs to the sugar phosphate cyclases superfamily. Dehydroquinate synthase family. Co(2+) serves as cofactor. Zn(2+) is required as a cofactor. The cofactor is NAD(+).

It is found in the cytoplasm. It catalyses the reaction 7-phospho-2-dehydro-3-deoxy-D-arabino-heptonate = 3-dehydroquinate + phosphate. Its pathway is metabolic intermediate biosynthesis; chorismate biosynthesis; chorismate from D-erythrose 4-phosphate and phosphoenolpyruvate: step 2/7. Functionally, catalyzes the conversion of 3-deoxy-D-arabino-heptulosonate 7-phosphate (DAHP) to dehydroquinate (DHQ). The chain is 3-dehydroquinate synthase from Enterobacter sp. (strain 638).